Consider the following 68-residue polypeptide: Glu S.griseus protease inhibitor (68 aa).

N-acetylserine is present on Ser1. A disulfide bond links Cys3 and Cys48.

It belongs to the protease inhibitor I13 (potato type I serine protease inhibitor) family.

Competitively inhibits Glu S.griseus protease by forming probably a 1:1 complex. BGIA has no inhibitory activity against 2 other acidic amino acid-specific endopeptidases (S.aureus protease V8 and B.subtilis proteinase), chymotrypsin, trypsin, pancreatic elastase, and papain, although subtilisin Carlsberg was strongly inhibited. The chain is Glu S.griseus protease inhibitor from Momordica charantia (Bitter gourd).